The chain runs to 314 residues: Homeobox protein knotted-1-like 3 (314 aa).

One can recognise an ELK domain in the interval 218–238; sequence ELKIELKQGFKSRIEDVREEI. The segment at residues 239–302 is a DNA-binding region (homeobox; TALE-type); that stretch reads LRKRRAGKLP…NQRKRNWHNN (64 aa).

It belongs to the TALE/KNOX homeobox family. Isoform 1 is expressed in roots and flowers, and at lower levels in leaf blades and leaf sheaths. Isoform 2 is expressed in roots and flowers.

The protein localises to the nucleus. In Oryza sativa subsp. japonica (Rice), this protein is Homeobox protein knotted-1-like 3 (HOS66).